Reading from the N-terminus, the 213-residue chain is uncharacterized protein (213 aa).

The S-adenosyl-L-methionine site is built by Gly-53, Glu-74, and Asp-97.

It belongs to the methyltransferase superfamily. YrrT family.

Its function is as follows. Could be a S-adenosyl-L-methionine-dependent methyltransferase. This is an uncharacterized protein from Bacillus subtilis (strain 168).